Consider the following 138-residue polypeptide: Cysteine desulfuration protein SufE (138 aa).

Cys51 serves as the catalytic Cysteine persulfide intermediate.

Belongs to the SufE family. In terms of assembly, homodimer. Interacts with SufS.

Its subcellular location is the cytoplasm. It participates in cofactor biosynthesis; iron-sulfur cluster biosynthesis. Functionally, participates in cysteine desulfuration mediated by SufS. Cysteine desulfuration mobilizes sulfur from L-cysteine to yield L-alanine and constitutes an essential step in sulfur metabolism for biosynthesis of a variety of sulfur-containing biomolecules. Functions as a sulfur acceptor for SufS, by mediating the direct transfer of the sulfur atom from the S-sulfanylcysteine of SufS, an intermediate product of cysteine desulfuration process. This Salmonella dublin (strain CT_02021853) protein is Cysteine desulfuration protein SufE.